Consider the following 189-residue polypeptide: MAQLYYKYGTMNSGKTIEILKVAHNYEEQGKPVVIMTSALDTRDEFGVVSSRIGMRREAVPISDDMDIFSYIQNLPQKPYCVLIDECQFLSKKNVYDLARVVDDLDVPVMAFGLKNDFQNNLFEGSKHLLLLADKIDEIKTICQYCSKKATMVLRTENGKPVYEGDQIQIGGNETYIPVCRKHYFNPDI.

ATP-binding positions include 9 to 16 and 85 to 88; these read GTMNSGKT and DECQ. Glutamate 86 functions as the Proton acceptor in the catalytic mechanism. Zn(2+)-binding residues include cysteine 143, cysteine 146, cysteine 180, and histidine 183.

Belongs to the thymidine kinase family. As to quaternary structure, homotetramer.

It localises to the cytoplasm. The enzyme catalyses thymidine + ATP = dTMP + ADP + H(+). The chain is Thymidine kinase from Streptococcus agalactiae serotype Ia (strain ATCC 27591 / A909 / CDC SS700).